A 585-amino-acid polypeptide reads, in one-letter code: MGRIIRVTGPLVVADGMKGAKMYEVVRVGEMGLIGEIIRLEGDKAVIQVYEETAGIRPGEPVEGTGSSLSVELGPGLLTSMYDGIQRPLDVLRQLSGDFIARGLTAPALPRDKKWHFTPKVKVGDKVVGGDILGVVPETSIIEHKILVPPWVEGEIVEIAEEGDYTVEEVIVKVKKPDGTIEELKMYHRWPVRVKRPYKQKLPPEVPLITGQRTIDTFFSQAKGGTAAIPGPFGSGKTVTQHQLAKWSDAQVVVYIGCGERGNEMTDVLEEFPKLKDPKTGKPLMERTVLIANTSNMPVAAREASIYTGITIAEYFRDQGYDVALMADSTSRWAEALREISGRLEEMPGEEGYPAYLASKIAEFYERAGRVITLGSDERVGSVSVIGAVSPPGGDFSEPVVQNTLRVVKVFWALDADLARRRHFPAINWLRSYSLYVDAIQDWWHKNVDPEWRKMRDTAMALLQKEAELQEIVRIVGPDALPDREKAILIVTRMLREDYLQQDAFDEVDTYCPPKKQVTMMRVILNFYEKTMQAVDRGVPVDEIAKLPVREKIGRMKFEPDVEKVRALIDETNQQFEELFKKYGA.

231–238 (GPFGSGKT) contributes to the ATP binding site.

It belongs to the ATPase alpha/beta chains family. As to quaternary structure, has multiple subunits with at least A(3), B(3), C, D, E, F, H, I and proteolipid K(x).

The protein resides in the cell membrane. The catalysed reaction is ATP + H2O + 4 H(+)(in) = ADP + phosphate + 5 H(+)(out). Produces ATP from ADP in the presence of a proton gradient across the membrane. The archaeal alpha chain is a catalytic subunit. In terms of biological role, component of the A-type ATP synthase that produces ATP from ADP in the presence of a proton gradient across the membrane. The A chain is the catalytic subunit. The protein is A-type ATP synthase subunit A of Thermococcus sp. (strain KI).